The following is a 444-amino-acid chain: UDP-N-acetylmuramate--L-alanine ligase (444 aa).

ATP is bound at residue 110–116; that stretch reads GAHGKTS.

The protein belongs to the MurCDEF family.

The protein localises to the cytoplasm. The enzyme catalyses UDP-N-acetyl-alpha-D-muramate + L-alanine + ATP = UDP-N-acetyl-alpha-D-muramoyl-L-alanine + ADP + phosphate + H(+). It participates in cell wall biogenesis; peptidoglycan biosynthesis. In terms of biological role, cell wall formation. The sequence is that of UDP-N-acetylmuramate--L-alanine ligase from Streptococcus pneumoniae (strain ATCC 700669 / Spain 23F-1).